The following is a 187-amino-acid chain: GTP cyclohydrolase 1 (187 aa).

Zn(2+)-binding residues include C76, H79, and C148.

It belongs to the GTP cyclohydrolase I family. In terms of assembly, toroid-shaped homodecamer, composed of two pentamers of five dimers.

The catalysed reaction is GTP + H2O = 7,8-dihydroneopterin 3'-triphosphate + formate + H(+). The protein operates within cofactor biosynthesis; 7,8-dihydroneopterin triphosphate biosynthesis; 7,8-dihydroneopterin triphosphate from GTP: step 1/1. This is GTP cyclohydrolase 1 from Acetivibrio thermocellus (strain ATCC 27405 / DSM 1237 / JCM 9322 / NBRC 103400 / NCIMB 10682 / NRRL B-4536 / VPI 7372) (Clostridium thermocellum).